A 426-amino-acid chain; its full sequence is UDP-N-acetylglucosamine 1-carboxyvinyltransferase (426 aa).

23 to 24 is a phosphoenolpyruvate binding site; it reads KN. Arg99 contributes to the UDP-N-acetyl-alpha-D-glucosamine binding site. Asp123 functions as the Proton donor in the catalytic mechanism. Positions 311 and 333 each coordinate UDP-N-acetyl-alpha-D-glucosamine.

This sequence belongs to the EPSP synthase family. MurA subfamily.

The protein localises to the cytoplasm. It carries out the reaction phosphoenolpyruvate + UDP-N-acetyl-alpha-D-glucosamine = UDP-N-acetyl-3-O-(1-carboxyvinyl)-alpha-D-glucosamine + phosphate. Its pathway is cell wall biogenesis; peptidoglycan biosynthesis. In terms of biological role, cell wall formation. Adds enolpyruvyl to UDP-N-acetylglucosamine. The protein is UDP-N-acetylglucosamine 1-carboxyvinyltransferase of Nocardia farcinica (strain IFM 10152).